A 201-amino-acid polypeptide reads, in one-letter code: Small ribosomal subunit protein uS5 (201 aa).

Residues 1 to 28 are disordered; the sequence is MAGPQRRGSGAGGGERRDRKGRDGGASA. Basic and acidic residues predominate over residues 14 to 23; it reads GERRDRKGRD. An S5 DRBM domain is found at 34–97; sequence YVERVVAINR…EEAKKNFFKV (64 aa).

Belongs to the universal ribosomal protein uS5 family. As to quaternary structure, part of the 30S ribosomal subunit. Contacts proteins S4 and S8.

Its function is as follows. With S4 and S12 plays an important role in translational accuracy. Located at the back of the 30S subunit body where it stabilizes the conformation of the head with respect to the body. The polypeptide is Small ribosomal subunit protein uS5 (Streptomyces griseus subsp. griseus (strain JCM 4626 / CBS 651.72 / NBRC 13350 / KCC S-0626 / ISP 5235)).